A 289-amino-acid chain; its full sequence is MEGKEEDVRLGANRYSERQPIGTAAQGAGDDKDYKEPPPAPLFEPGELKSWSFYRAGIAEFVATFLFLYITILTVMGVSKSSSKCATVGIQGIAWSFGGMIFALVYCTAGISGGHINPAVTFGLFLARKLSLTRAIFYIVMQCLGAICGAGVVKGFQQGLYMGNGGGANVVASGYTKGDGLGAEIVGTFILVYTVFSATDAKRNARDSHVPILAPLPIGFAVFLVHLATIPITGTGINPARSLGAAIIYNKDHAWNDHWIFWVGPFVGAALAAIYHQVIIRAIPFKSRS.

Residues 1-36 form a disordered region; that stretch reads MEGKEEDVRLGANRYSERQPIGTAAQGAGDDKDYKE. 2 consecutive transmembrane segments (helical) span residues 58–78 and 93–115; these read IAEF…VMGV and IAWS…SGGH. The NPA 1 motif lies at 117–119; it reads NPA. 3 consecutive transmembrane segments (helical) span residues 136–156, 178–198, and 212–232; these read IFYI…VKGF, GDGL…VFSA, and ILAP…TIPI. Residues 238 to 240 carry the NPA 2 motif; the sequence is NPA. A helical membrane pass occupies residues 260–280; it reads IFWVGPFVGAALAAIYHQVII.

The protein belongs to the MIP/aquaporin (TC 1.A.8) family. PIP (TC 1.A.8.11) subfamily. Expressed in roots, leaves and anthers.

Its subcellular location is the cell membrane. Functionally, may function as water channel to facilitate the transport of water across cell membrane. This is Aquaporin PIP1-1 (PIP1-1) from Oryza sativa subsp. japonica (Rice).